Here is a 312-residue protein sequence, read N- to C-terminus: DNA primase small subunit PriS (312 aa).

Residues Asp88, Asp90, and Asp215 contribute to the active site.

This sequence belongs to the eukaryotic-type primase small subunit family. As to quaternary structure, heterodimer of a small subunit (PriS) and a large subunit (PriL). Requires Mg(2+) as cofactor. The cofactor is Mn(2+).

Functionally, catalytic subunit of DNA primase, an RNA polymerase that catalyzes the synthesis of short RNA molecules used as primers for DNA polymerase during DNA replication. The small subunit contains the primase catalytic core and has DNA synthesis activity on its own. Binding to the large subunit stabilizes and modulates the activity, increasing the rate of DNA synthesis while decreasing the length of the DNA fragments, and conferring RNA synthesis capability. The DNA polymerase activity may enable DNA primase to also catalyze primer extension after primer synthesis. May also play a role in DNA repair. The polypeptide is DNA primase small subunit PriS (Pyrobaculum arsenaticum (strain DSM 13514 / JCM 11321 / PZ6)).